Here is a 59-residue protein sequence, read N- to C-terminus: Large ribosomal subunit protein uL30 (59 aa).

The protein belongs to the universal ribosomal protein uL30 family. In terms of assembly, part of the 50S ribosomal subunit.

This chain is Large ribosomal subunit protein uL30, found in Mycolicibacterium vanbaalenii (strain DSM 7251 / JCM 13017 / BCRC 16820 / KCTC 9966 / NRRL B-24157 / PYR-1) (Mycobacterium vanbaalenii).